A 45-amino-acid polypeptide reads, in one-letter code: INNWVRVPPCDQVCSRTNPEKDECCRAHGHAFHATCSGGMQCYRR.

Cystine bridges form between cysteine 10/cysteine 24, cysteine 14/cysteine 36, and cysteine 25/cysteine 42.

In terms of assembly, monomer. In terms of tissue distribution, hemolymph.

Its subcellular location is the secreted. Functionally, has antimicrobial activity. Is particularly active against fungi, and to a lesser extent against Gram-positive and Gram-negative bacteria. The sequence is that of Psychimicin from Oiketicus kirbyi (Bagworm moth).